The primary structure comprises 833 residues: Leucine--tRNA ligase (833 aa).

A 'HIGH' region motif is present at residues proline 41–histidine 52. Positions lysine 610 to serine 614 match the 'KMSKS' region motif. Position 613 (lysine 613) interacts with ATP.

The protein belongs to the class-I aminoacyl-tRNA synthetase family.

The protein localises to the cytoplasm. The catalysed reaction is tRNA(Leu) + L-leucine + ATP = L-leucyl-tRNA(Leu) + AMP + diphosphate. The polypeptide is Leucine--tRNA ligase (Streptococcus equi subsp. zooepidemicus (strain H70)).